Reading from the N-terminus, the 346-residue chain is Coproporphyrin III ferrochelatase (346 aa).

2 residues coordinate Fe-coproporphyrin III: serine 52 and tyrosine 121. 2 residues coordinate Fe(2+): histidine 181 and glutamate 264.

Belongs to the ferrochelatase family.

It localises to the cytoplasm. The catalysed reaction is Fe-coproporphyrin III + 2 H(+) = coproporphyrin III + Fe(2+). The protein operates within porphyrin-containing compound metabolism; protoheme biosynthesis. Its function is as follows. Involved in coproporphyrin-dependent heme b biosynthesis. Catalyzes the insertion of ferrous iron into coproporphyrin III to form Fe-coproporphyrin III. This Mycobacterium sp. (strain KMS) protein is Coproporphyrin III ferrochelatase.